The sequence spans 595 residues: 2-succinyl-5-enolpyruvyl-6-hydroxy-3-cyclohexene-1-carboxylate synthase (595 aa).

It belongs to the TPP enzyme family. MenD subfamily. As to quaternary structure, homodimer. Requires Mg(2+) as cofactor. It depends on Mn(2+) as a cofactor. Thiamine diphosphate serves as cofactor.

It carries out the reaction isochorismate + 2-oxoglutarate + H(+) = 5-enolpyruvoyl-6-hydroxy-2-succinyl-cyclohex-3-ene-1-carboxylate + CO2. The protein operates within quinol/quinone metabolism; 1,4-dihydroxy-2-naphthoate biosynthesis; 1,4-dihydroxy-2-naphthoate from chorismate: step 2/7. Its pathway is cofactor biosynthesis; phylloquinone biosynthesis. Catalyzes the thiamine diphosphate-dependent decarboxylation of 2-oxoglutarate and the subsequent addition of the resulting succinic semialdehyde-thiamine pyrophosphate anion to isochorismate to yield 2-succinyl-5-enolpyruvyl-6-hydroxy-3-cyclohexene-1-carboxylate (SEPHCHC). The polypeptide is 2-succinyl-5-enolpyruvyl-6-hydroxy-3-cyclohexene-1-carboxylate synthase (Synechocystis sp. (strain ATCC 27184 / PCC 6803 / Kazusa)).